The following is a 250-amino-acid chain: Sugar fermentation stimulation protein homolog (250 aa).

Belongs to the SfsA family.

In Synechococcus sp. (strain CC9311), this protein is Sugar fermentation stimulation protein homolog.